A 382-amino-acid chain; its full sequence is 1-deoxy-D-xylulose 5-phosphate reductoisomerase (382 aa).

NADPH contacts are provided by serine 10, glycine 11, serine 12, isoleucine 13, glycine 36, lysine 37, asparagine 38, and asparagine 121. Lysine 122 is a 1-deoxy-D-xylulose 5-phosphate binding site. Glutamate 123 is an NADPH binding site. Aspartate 147 lines the Mn(2+) pocket. Positions 148, 149, 173, and 196 each coordinate 1-deoxy-D-xylulose 5-phosphate. Glutamate 149 is a Mn(2+) binding site. Position 202 (glycine 202) interacts with NADPH. 1-deoxy-D-xylulose 5-phosphate is bound by residues serine 209, asparagine 214, lysine 215, and glutamate 218. Position 218 (glutamate 218) interacts with Mn(2+).

The protein belongs to the DXR family. The cofactor is Mg(2+). Mn(2+) serves as cofactor.

The enzyme catalyses 2-C-methyl-D-erythritol 4-phosphate + NADP(+) = 1-deoxy-D-xylulose 5-phosphate + NADPH + H(+). The protein operates within isoprenoid biosynthesis; isopentenyl diphosphate biosynthesis via DXP pathway; isopentenyl diphosphate from 1-deoxy-D-xylulose 5-phosphate: step 1/6. Catalyzes the NADPH-dependent rearrangement and reduction of 1-deoxy-D-xylulose-5-phosphate (DXP) to 2-C-methyl-D-erythritol 4-phosphate (MEP). The polypeptide is 1-deoxy-D-xylulose 5-phosphate reductoisomerase (Geobacillus kaustophilus (strain HTA426)).